Here is a 484-residue protein sequence, read N- to C-terminus: ATP-dependent rRNA helicase RRP3 (484 aa).

2 stretches are compositionally biased toward low complexity: residues 1 to 14 (MPSP…SMSQ) and 22 to 34 (PSPA…APEA). A disordered region spans residues 1–38 (MPSPSPEASSSMSQPGPPSRSPSPASSNPDAPEASHNK). The short motif at 38-66 (KTFADLGISPELCRACASMGFKKPSDIQA) is the Q motif element. The Helicase ATP-binding domain maps to 69–240 (IPHALEGKDI…RASLNKPVRV (172 aa)). Residue 82-89 (AQTGSGKT) coordinates ATP. The short motif at 188-191 (DEAD) is the DEAD box element. A Helicase C-terminal domain is found at 263-411 (NKDAYLLYLA…SFDVDKEAVA (149 aa)). A disordered region spans residues 425 to 484 (ALEMRESGTGGGGGKRGRDKGKRKTFGDGDDRDRDDDVVEAGVPRKKNKFTPGGKKKARK). 2 stretches are compositionally biased toward basic residues: residues 439–448 (KRGRDKGKRK) and 468–484 (PRKK…KARK).

The protein belongs to the DEAD box helicase family. DDX47/RRP3 subfamily. Interacts with the SSU processome.

The protein localises to the nucleus. The enzyme catalyses ATP + H2O = ADP + phosphate + H(+). In terms of biological role, ATP-dependent rRNA helicase required for pre-ribosomal RNA processing. Involved in the maturation of the 35S-pre-rRNA and to its cleavage to mature 18S rRNA. In Cryptococcus neoformans var. neoformans serotype D (strain B-3501A) (Filobasidiella neoformans), this protein is ATP-dependent rRNA helicase RRP3.